The chain runs to 422 residues: Testin (422 aa).

In terms of domain architecture, PET spans 92-199; the sequence is MILTSPVAAK…GDVKLPKEVE (108 aa). A disordered region spans residues 135–165; sequence QPVAGSEGAQYRKKQLAKQLPAHDQDPSKCH. A compositionally biased stretch (basic and acidic residues) spans 155–165; it reads PAHDQDPSKCH. LIM zinc-binding domains follow at residues 234–299, 300–359, and 360–422; these read YYCF…SEKP, RCAG…NHAV, and SCQG…KMSS.

This sequence belongs to the prickle / espinas / testin family. Expressed in the animal hemisphere at the 4-cell stage. By stage 18, expressed in cells adjacent to the anterior neural plate. In late neurula, expressed in the cranial neural crest. At tail bud stages, expressed strongly in the head, ventral to the developing eye, branchial arches and lateral line placodes. Also localized in the otic vesicle, dorsal fin and notochord with weaker expression at intersomitic junctions of tail bud embryos.

The protein localises to the cytoplasm. Its subcellular location is the cell cortex. The protein resides in the cell junction. It is found in the focal adhesion. Functionally, scaffold protein that may play a role in cell adhesion, cell spreading and in the reorganization of the actin cytoskeleton. May inhibit cell growth. Regulates cranial neural crest migration. Acts together with prickle1 to control axial elongation. In Xenopus laevis (African clawed frog), this protein is Testin.